The following is a 338-amino-acid chain: Aspartate--ammonia ligase (338 aa).

The protein belongs to the class-II aminoacyl-tRNA synthetase family. AsnA subfamily.

The protein resides in the cytoplasm. It catalyses the reaction L-aspartate + NH4(+) + ATP = L-asparagine + AMP + diphosphate + H(+). It participates in amino-acid biosynthesis; L-asparagine biosynthesis; L-asparagine from L-aspartate (ammonia route): step 1/1. The protein is Aspartate--ammonia ligase of Lactobacillus delbrueckii subsp. bulgaricus (strain ATCC BAA-365 / Lb-18).